We begin with the raw amino-acid sequence, 369 residues long: Olfactory receptor 2T1 (369 aa).

Residues 1-76 (MWQEYYFLNV…LFNRKETSGL (76 aa)) are Extracellular-facing. A glycan (N-linked (GlcNAc...) asparagine) is linked at N56. A helical transmembrane segment spans residues 77 to 97 (IFAIISIIFFTALMANGVMIF). Residues 98–107 (LIQTDLRLHT) are Cytoplasmic-facing. The helical transmembrane segment at 108-128 (PMYFLLSHLSLIDMMYISTIV) threads the bilayer. The Extracellular portion of the chain corresponds to 129–148 (PKMLVNYLLDQRTISFVGCT). C147 and C239 are joined by a disulfide. The chain crosses the membrane as a helical span at residues 149–169 (AQHFLYLTLVGAEFFLLGLMA). At 170–191 (YDRYVAICNPLRYPVLMSRRVC) the chain is on the cytoplasmic side. The chain crosses the membrane as a helical span at residues 192 to 212 (WMIIAGSWFGGSLDGFLLTPI). Over 213-247 (TMSFPFCNSREINHFFCEAPAVLKLACADTALYET) the chain is Extracellular. Residues 248-268 (VMYVCCVLMLLIPFSVVLASY) traverse the membrane as a helical segment. The Cytoplasmic segment spans residues 269–286 (ARILTTVQCMSSVEGRKK). Residues 287–307 (AFATCSSHMTVVSLFYGAAMY) traverse the membrane as a helical segment. At 308–321 (TYMLPHSYHKPAQD) the chain is on the extracellular side. Residues 322-342 (KVLSVFYTILTPMLNPLIYSL) form a helical membrane-spanning segment. At 343–369 (RNKDVTGALKRALGRFKGPQRVSGGVF) the chain is on the cytoplasmic side.

It belongs to the G-protein coupled receptor 1 family.

The protein localises to the cell membrane. In terms of biological role, odorant receptor. The protein is Olfactory receptor 2T1 (OR2T1) of Homo sapiens (Human).